Consider the following 659-residue polypeptide: tRNA uridine 5-carboxymethylaminomethyl modification enzyme MnmG (659 aa).

FAD is bound at residue 13-18 (GGGHAG). 281 to 295 (GPRYCPSVEDKINRF) lines the NAD(+) pocket.

The protein belongs to the MnmG family. Homodimer. Heterotetramer of two MnmE and two MnmG subunits. The cofactor is FAD.

It is found in the cytoplasm. Functionally, NAD-binding protein involved in the addition of a carboxymethylaminomethyl (cmnm) group at the wobble position (U34) of certain tRNAs, forming tRNA-cmnm(5)s(2)U34. The sequence is that of tRNA uridine 5-carboxymethylaminomethyl modification enzyme MnmG from Delftia acidovorans (strain DSM 14801 / SPH-1).